The primary structure comprises 293 residues: MPWIQLKLNTTGANAEELSDALMEAGAVSITFQDTHNTPVFEPLPGETRLWGDTDVIGLFDAETDMKDVVAILEQHPLLGAGFAHKIEQLEDKDWEREWMDNFHPMRFGERLWICPSWRDIPDENAVNVMLDPGLAFGTGTHPTTSLCLQWLDGLDLNGKTVIDFGCGSGILAIAALKLGAAKAIGIDIDPQAIQASRDNAERNGVSDRLELYLPKDQPEAMKADVVVANILAGPLRELAPLISVLPVEGGLLGLSGVLASQAESVCDAYAELFTLDPVVEKEEWCRITGRKK.

S-adenosyl-L-methionine contacts are provided by threonine 145, glycine 166, aspartate 188, and asparagine 230.

Belongs to the methyltransferase superfamily. PrmA family.

Its subcellular location is the cytoplasm. It carries out the reaction L-lysyl-[protein] + 3 S-adenosyl-L-methionine = N(6),N(6),N(6)-trimethyl-L-lysyl-[protein] + 3 S-adenosyl-L-homocysteine + 3 H(+). In terms of biological role, methylates ribosomal protein L11. In Salmonella dublin (strain CT_02021853), this protein is Ribosomal protein L11 methyltransferase.